Reading from the N-terminus, the 496-residue chain is MFS transporter cpaT (496 aa).

The tract at residues 1 to 45 (MGHQEEPPRICKTPSGHEQGEGPAEKTSKPSTEEVGWDGPTDPAR) is disordered. The span at 18 to 32 (EQGEGPAEKTSKPST) shows a compositional bias: basic and acidic residues. N-linked (GlcNAc...) asparagine glycosylation occurs at Asn48. A helical membrane pass occupies residues 58–78 (MGIISYLTFLTPLTSSIVAPA). The N-linked (GlcNAc...) asparagine glycan is linked to Asn90. The next 5 helical transmembrane spans lie at 93–113 (LASF…LFLA), 130–150 (FIFT…ALLV), 154–174 (FAGI…ADMF), 180–200 (GVAM…GPIA), and 212–232 (WVFW…LFVL). The N-linked (GlcNAc...) asparagine glycan is linked to Asn252. The next 6 membrane-spanning stretches (helical) occupy residues 288 to 308 (VALF…LFTT), 325 to 345 (GLVY…FGAL), 367 to 387 (LPPL…YGWS), 395 to 415 (IMPI…LLPI), 427 to 449 (AASA…PLAG), and 463 to 483 (SLLG…YFYG).

This sequence belongs to the major facilitator superfamily.

The protein localises to the membrane. Functionally, MFS transporter; part of the gene cluster that mediates the biosynthesis of the fungal neurotoxin cyclopiazonic acid (CPA), a nanomolar inhibitor of Ca(2+)-ATPase with a unique pentacyclic indole tetramic acid scaffold. The polypeptide is MFS transporter cpaT (Aspergillus oryzae (Yellow koji mold)).